The primary structure comprises 66 residues: Regulator of G-protein signaling 11 (66 aa).

The region spanning 1-66 (EACEELRFGG…DAAQLHIYML (66 aa)) is the RGS domain.

Heterodimer with Gbeta5. Interacts with RGS7BP, leading to regulate the subcellular location of the heterodimer formed with Gbeta5.

Inhibits signal transduction by increasing the GTPase activity of G protein alpha subunits thereby driving them into their inactive GDP-bound form. The polypeptide is Regulator of G-protein signaling 11 (Rgs11) (Rattus norvegicus (Rat)).